Consider the following 202-residue polypeptide: Protein DCV1 (202 aa).

The first 18 residues, 1 to 18 (MLNYKLILLFSSFLQLIS), serve as a signal peptide directing secretion. 3 helical membrane passes run 91–107 (IGGL…LTFI), 137–155 (ILTL…LLCM), and 168–189 (LVWL…FLSF).

Its subcellular location is the membrane. The sequence is that of Protein DCV1 (DCV1) from Saccharomyces cerevisiae (strain ATCC 204508 / S288c) (Baker's yeast).